The sequence spans 404 residues: Triose phosphate/phosphate translocator, chloroplastic (404 aa).

Residues 1–74 constitute a chloroplast transit peptide; that stretch reads MESRVLSRTT…GPVCSRREKT (74 aa). At 75–98 the chain is on the chloroplast intermembrane side; it reads AVQPCRAASGSSGEAKTGFLEKYP. A helical transmembrane segment spans residues 99–119; the sequence is ALVTGSFFFMWYFLNVIFNIL. Residues 120-131 lie on the Lumenal side of the membrane; it reads NKKIYNYFPYPY. Residues 132 to 152 traverse the membrane as a helical segment; it reads FVSVIHLFVGVVYCLASWSVG. Topologically, residues 153 to 209 are chloroplast intermembrane; that stretch reads LPKRAPMDSKLLKLLIPVAVCHAIGHVTSNVSFAAVAVSFTHTIKALEPFFNAAASQ. Residues 210–230 traverse the membrane as a helical segment; sequence FVLGQSIPITLWLSLAPVVIG. The Lumenal segment spans residues 231–274; it reads VSMASLTELSFNWLGFISAMISNVSFTYRSLYSKKAMTDMDSTN. The chain crosses the membrane as a helical span at residues 275–294; the sequence is IYAYISIIALFVCLPPAIIV. The Chloroplast intermembrane portion of the chain corresponds to 295–372; the sequence is EGPQLMKHGF…IAFGNKISTQ (78 aa). A helical membrane pass occupies residues 373-393; that stretch reads TAIGTSIAIAGVALYSLIKAK. The Lumenal portion of the chain corresponds to 394–404; the sequence is MEEEKRQMKST.

Belongs to the TPT transporter family. TPT (TC 2.A.7.9) subfamily. In terms of processing, the N-terminus is blocked.

Its subcellular location is the plastid. The protein resides in the chloroplast membrane. Its function is as follows. Mediates the export of fixed carbons from the chloroplasts into the cytosol in the form of triose phosphates. The sequence is that of Triose phosphate/phosphate translocator, chloroplastic from Spinacia oleracea (Spinach).